Here is a 335-residue protein sequence, read N- to C-terminus: Cathepsin B (335 aa).

An N-terminal signal peptide occupies residues 1–19 (MWQLLATLSCLLVLTSARS). Positions 20–79 (SLHFPPLSDEMVNYVNKQNTTWKAGHNFYNVDLSYVKKLCGAILGGPKLPQRDAFAADMV) are cleaved as a propeptide — activation peptide. Intrachain disulfides connect Cys-93-Cys-122, Cys-105-Cys-150, Cys-141-Cys-207, Cys-142-Cys-146, Cys-179-Cys-211, and Cys-187-Cys-198. The active site involves Cys-108. Asn-192 is a glycosylation site (N-linked (GlcNAc...) asparagine). At Lys-220 the chain carries N6-acetyllysine. Catalysis depends on residues His-278 and Asn-298. A propeptide spanning residues 333 to 335 (HQH) is cleaved from the precursor.

Belongs to the peptidase C1 family. In terms of assembly, dimer of a heavy chain and a light chain cross-linked by a disulfide bond. Interacts with SRPX2. Directly interacts with SHKBP1.

The protein localises to the lysosome. The protein resides in the melanosome. Its subcellular location is the secreted. It is found in the extracellular space. It localises to the apical cell membrane. It catalyses the reaction Hydrolysis of proteins with broad specificity for peptide bonds. Preferentially cleaves -Arg-Arg-|-Xaa bonds in small molecule substrates (thus differing from cathepsin L). In addition to being an endopeptidase, shows peptidyl-dipeptidase activity, liberating C-terminal dipeptides.. In terms of biological role, thiol protease which is believed to participate in intracellular degradation and turnover of proteins. Cleaves matrix extracellular phosphoglycoprotein MEPE. Involved in the solubilization of cross-linked TG/thyroglobulin in the thyroid follicle lumen. Has also been implicated in tumor invasion and metastasis. The protein is Cathepsin B (CTSB) of Ovis aries (Sheep).